A 212-amino-acid chain; its full sequence is Large ribosomal subunit protein uL4 (212 aa).

It belongs to the universal ribosomal protein uL4 family. In terms of assembly, part of the 50S ribosomal subunit.

One of the primary rRNA binding proteins, this protein initially binds near the 5'-end of the 23S rRNA. It is important during the early stages of 50S assembly. It makes multiple contacts with different domains of the 23S rRNA in the assembled 50S subunit and ribosome. Functionally, forms part of the polypeptide exit tunnel. The chain is Large ribosomal subunit protein uL4 from Caulobacter sp. (strain K31).